A 426-amino-acid polypeptide reads, in one-letter code: Anhydromevalonate phosphate decarboxylase (426 aa).

Mn(2+) contacts are provided by N148 and E211. The Proton acceptor role is filled by D255.

This sequence belongs to the UbiD family. It depends on prenylated FMN as a cofactor. Mn(2+) serves as cofactor.

It catalyses the reaction (2E)-3-methyl-5-phosphooxypent-2-enoate + H(+) = isopentenyl phosphate + CO2. It participates in isoprenoid biosynthesis; isopentenyl diphosphate biosynthesis via mevalonate pathway. Catalyzes the conversion of trans-anhydromevalonate 5-phosphate (tAHMP) into isopentenyl phosphate. Involved in the archaeal mevalonate (MVA) pathway, which provides fundamental precursors for isoprenoid biosynthesis, such as isopentenyl diphosphate (IPP) and dimethylallyl diphosphate (DMAPP). The protein is Anhydromevalonate phosphate decarboxylase of Archaeoglobus fulgidus (strain ATCC 49558 / DSM 4304 / JCM 9628 / NBRC 100126 / VC-16).